The primary structure comprises 488 residues: Glutamate--tRNA ligase (488 aa).

Residues 9–19 carry the 'HIGH' region motif; sequence PSPTGFLHIGG. C112, C114, C139, and H141 together coordinate Zn(2+). The 'KMSKS' region signature appears at 256-260; it reads KLSKR. An ATP-binding site is contributed by K259.

The protein belongs to the class-I aminoacyl-tRNA synthetase family. Glutamate--tRNA ligase type 1 subfamily. As to quaternary structure, monomer. The cofactor is Zn(2+).

It is found in the cytoplasm. It carries out the reaction tRNA(Glu) + L-glutamate + ATP = L-glutamyl-tRNA(Glu) + AMP + diphosphate. In terms of biological role, catalyzes the attachment of glutamate to tRNA(Glu) in a two-step reaction: glutamate is first activated by ATP to form Glu-AMP and then transferred to the acceptor end of tRNA(Glu). In Elusimicrobium minutum (strain Pei191), this protein is Glutamate--tRNA ligase.